A 236-amino-acid polypeptide reads, in one-letter code: Ubiquinone biosynthesis O-methyltransferase (236 aa).

S-adenosyl-L-methionine contacts are provided by arginine 39, glycine 59, aspartate 80, and methionine 124.

It belongs to the methyltransferase superfamily. UbiG/COQ3 family.

It carries out the reaction a 3-demethylubiquinol + S-adenosyl-L-methionine = a ubiquinol + S-adenosyl-L-homocysteine + H(+). The catalysed reaction is a 3-(all-trans-polyprenyl)benzene-1,2-diol + S-adenosyl-L-methionine = a 2-methoxy-6-(all-trans-polyprenyl)phenol + S-adenosyl-L-homocysteine + H(+). The protein operates within cofactor biosynthesis; ubiquinone biosynthesis. In terms of biological role, O-methyltransferase that catalyzes the 2 O-methylation steps in the ubiquinone biosynthetic pathway. This chain is Ubiquinone biosynthesis O-methyltransferase, found in Shewanella baltica (strain OS223).